Here is a 436-residue protein sequence, read N- to C-terminus: Ribosomal protein uS12 methylthiotransferase RimO (436 aa).

The region spanning 2 to 117 (RNVGIISLGC…IVDVIEEVKK (116 aa)) is the MTTase N-terminal domain. [4Fe-4S] cluster-binding residues include cysteine 11, cysteine 47, cysteine 80, cysteine 154, cysteine 158, and cysteine 161. Residues 140 to 369 (TTPPYYAYLK…MEIQKQISYE (230 aa)) form the Radical SAM core domain. The TRAM domain occupies 372–436 (MSKIGTKLEV…AFEYDLVGEY (65 aa)).

It belongs to the methylthiotransferase family. RimO subfamily. It depends on [4Fe-4S] cluster as a cofactor.

Its subcellular location is the cytoplasm. The enzyme catalyses L-aspartate(89)-[ribosomal protein uS12]-hydrogen + (sulfur carrier)-SH + AH2 + 2 S-adenosyl-L-methionine = 3-methylsulfanyl-L-aspartate(89)-[ribosomal protein uS12]-hydrogen + (sulfur carrier)-H + 5'-deoxyadenosine + L-methionine + A + S-adenosyl-L-homocysteine + 2 H(+). Catalyzes the methylthiolation of an aspartic acid residue of ribosomal protein uS12. The polypeptide is Ribosomal protein uS12 methylthiotransferase RimO (Caldanaerobacter subterraneus subsp. tengcongensis (strain DSM 15242 / JCM 11007 / NBRC 100824 / MB4) (Thermoanaerobacter tengcongensis)).